Reading from the N-terminus, the 422-residue chain is Proton-gated ion channel subunit pbo-6 (422 aa).

A signal peptide spans 1–20; sequence MQCSFLTIFIFITTVTVGVA. At 21–233 the chain is on the extracellular side; sequence EFSEQYQGSS…IKVARKPFYY (213 aa). Cysteines 151 and 165 form a disulfide. Transmembrane regions (helical) follow at residues 234-254, 268-288, and 294-314; these read LISL…GLFA, LGVT…EKVP, and VPLL…ATIL. Residues 315 to 378 are Cytoplasmic-facing; sequence TSTVMRVHAK…GEVSRRMDYL (64 aa). The chain crosses the membrane as a helical span at residues 379–399; sequence LASVFIIIISTPTLYLFYMCF.

This sequence belongs to the ligand-gated ion channel (TC 1.A.9) family. Acetylcholine receptor (TC 1.A.9.1) subfamily. The functional channel is a hetero-oligomer of pbo-5 and pbo-6. In terms of tissue distribution, expressed in the posterior body muscles.

The protein localises to the membrane. Its function is as follows. Forms a proton-gated ion channel with pbo-5 that is activated by acidification of the posterior coelomic space, leading to posterior body wall muscle contraction (pBoc) during the defecation cycle. Not necessary for stimulation of posterior body contraction (pBoc). Does not bind neurotransmitters such as acetylcholine, gamma-aminobutyric acid, glycine, serotonin, glutamate or choline. The chain is Proton-gated ion channel subunit pbo-6 from Caenorhabditis elegans.